A 101-amino-acid chain; its full sequence is Small ubiquitin-related modifier 1 (101 aa).

Ser2 is modified (N-acetylserine). Ser2 is subject to Phosphoserine. A Glycyl lysine isopeptide (Lys-Gly) (interchain with G-Cter in SUMO1); alternate cross-link involves residue Lys7. Lys7 is covalently cross-linked (Glycyl lysine isopeptide (Lys-Gly) (interchain with G-Cter in SUMO2); alternate). Ser9 carries the post-translational modification Phosphoserine. Glycyl lysine isopeptide (Lys-Gly) (interchain with G-Cter in SUMO2) cross-links involve residues Lys16, Lys17, and Lys23. A Ubiquitin-like domain is found at 20–97; the sequence is EYIKLKVIGQ…IEVYHEQTGG (78 aa). A Glycyl lysine isopeptide (Lys-Gly) (interchain with G-Cter in SUMO1) cross-link involves residue Lys25. A Phosphoserine modification is found at Ser32. Residues Lys37, Lys39, Lys45, and Lys46 each participate in a glycyl lysine isopeptide (Lys-Gly) (interchain with G-Cter in SUMO2) cross-link. Gly97 is covalently cross-linked (Glycyl lysine isopeptide (Gly-Lys) (interchain with K-? in acceptor proteins)). The propeptide occupies 98-101; sequence HSTV.

Belongs to the ubiquitin family. SUMO subfamily. Covalently attached to KCNB1; UBE2I increases cross-linking with KCNB1 and PIAS1 decreases cross-links with KCNB1. Interacts with SAE2, RANBP2, PIAS1 and PIAS2. Interacts with PRKN. Covalently attached to a number of proteins such as IKFZ1, PML, RANGAP1, HIPK2, SP100, p53, p73-alpha, MDM2, JUN, DNMT3B and TDG. Also interacts with HIF1A, HIPK2, HIPK3, CHD3, EXOSC9, RAD51 and RAD52. Interacts with USP25 (via ts SIM domain); the interaction weakly sumoylates USP25. Interacts with SIMC1, CASP8AP2, RNF111 and SOBP (via SIM domains). Interacts with BHLHE40/DEC1. Interacts with RWDD3. Interacts with UBE2I/UBC9 and this interaction is enhanced in the presence of RWDD3. Interacts with MTA1. Interacts with SENP2. Interacts with HINT1. In terms of processing, cleavage of precursor form by SENP1, SENP2 is necessary for function. Post-translationally, polymeric SUMO1 chains undergo polyubiquitination by RNF4.

The protein localises to the nucleus membrane. It is found in the nucleus speckle. Its subcellular location is the cytoplasm. It localises to the nucleus. The protein resides in the PML body. The protein localises to the cell membrane. Ubiquitin-like protein that can be covalently attached to proteins as a monomer or a lysine-linked polymer. Covalent attachment via an isopeptide bond to its substrates requires prior activation by the E1 complex SAE1-SAE2 and linkage to the E2 enzyme UBE2I, and can be promoted by E3 ligases such as PIAS1-4, RANBP2 or CBX4. This post-translational modification on lysine residues of proteins plays a crucial role in a number of cellular processes such as nuclear transport, DNA replication and repair, mitosis and signal transduction. Involved for instance in targeting RANGAP1 to the nuclear pore complex protein RANBP2. Covalently attached to the voltage-gated potassium channel KCNB1; this modulates the gating characteristics of KCNB1. Polymeric SUMO1 chains are also susceptible to polyubiquitination which functions as a signal for proteasomal degradation of modified proteins. May also regulate a network of genes involved in palate development. Covalently attached to ZFHX3. This chain is Small ubiquitin-related modifier 1 (SUMO1), found in Cervus nippon (Sika deer).